Here is a 1400-residue protein sequence, read N- to C-terminus: DNA-directed RNA polymerase subunit beta' (1400 aa).

The Zn(2+) site is built by cysteine 71, cysteine 73, cysteine 86, and cysteine 89. Mg(2+) contacts are provided by aspartate 462, aspartate 464, and aspartate 466. Residues cysteine 810, cysteine 884, cysteine 891, and cysteine 894 each coordinate Zn(2+).

It belongs to the RNA polymerase beta' chain family. The RNAP catalytic core consists of 2 alpha, 1 beta, 1 beta' and 1 omega subunit. When a sigma factor is associated with the core the holoenzyme is formed, which can initiate transcription. It depends on Mg(2+) as a cofactor. Requires Zn(2+) as cofactor.

The enzyme catalyses RNA(n) + a ribonucleoside 5'-triphosphate = RNA(n+1) + diphosphate. In terms of biological role, DNA-dependent RNA polymerase catalyzes the transcription of DNA into RNA using the four ribonucleoside triphosphates as substrates. In Rhodopseudomonas palustris (strain TIE-1), this protein is DNA-directed RNA polymerase subunit beta'.